The sequence spans 700 residues: Autophagy-related protein 13 (700 aa).

The disordered stretch occupies residues 319 to 352 (GSINSSSSPPPGATQSNQSVSSFSTSKPIPVTLN). Residues 332-344 (TQSNQSVSSFSTS) are compositionally biased toward low complexity. Residues 399-407 (SSFGSRFRT) are ATG17-binding. Positions 428–487 (TPNNPILHNFRSRNKSPSVSSTELGPSSSIYMDDDLDSFMKMLDSKPDLRFPSNSPSVYE) are ATG1-binding. Over residues 506–532 (EQQQHGSPSSNQIMIHSQSQTSQSQVF) the composition is skewed to polar residues. Disordered stretches follow at residues 506–562 (EQQQ…PGVS), 576–637 (HASS…NPEL), and 649–700 (ESDD…NQEF). Residues 595–631 (SSPPASATAVATVHNSLRRLTSSSQRTNTNSTNSSTR) show a composition bias toward low complexity. Over residues 656-667 (DEHSPRSTDTKS) the composition is skewed to basic and acidic residues.

This sequence belongs to the ATG13 family. Fungi subfamily. In terms of assembly, hypophosphorylated form interacts with ATG1 to form the ATG1-ATG13 kinase complex. The ATG1-ATG13 complex interacts with the ATG17-ATG29-ATG31 complex through direct interaction with ATG17. Interacts with VAC8.

Its subcellular location is the cytoplasm. It localises to the preautophagosomal structure. Functionally, activates the ATG1 kinase in a nutritional condition dependent manner through the TOR pathway, leading to autophagy. Involved in ATG9 and ATG23 cycling through the pre-autophagosomal structure. Also involved in cytoplasm to vacuole transport (Cvt) and more specifically in Cvt vesicle formation. Seems to play a role in the switching machinery regulating the conversion between the Cvt pathway and autophagy. Finally, ATG13 is also required for glycogen storage during stationary phase. Acts as a negative regulator of xylose alcoholic fermentation, a role that is not related to autophagy. The protein is Autophagy-related protein 13 of Ogataea parapolymorpha (strain ATCC 26012 / BCRC 20466 / JCM 22074 / NRRL Y-7560 / DL-1) (Yeast).